The chain runs to 1325 residues: SCAN domain-containing protein 3 (1325 aa).

Positions Arg-52–Leu-134 constitute an SCAN box domain. Residues Lys-246 to Arg-275 adopt a coiled-coil conformation. The Integrase catalytic domain maps to Lys-366–Glu-526. Residues Ala-542–Asn-568 adopt a coiled-coil conformation.

As to expression, weakly expressed in the lung (at protein level).

It localises to the nucleus. This chain is SCAN domain-containing protein 3, found in Homo sapiens (Human).